A 491-amino-acid polypeptide reads, in one-letter code: Probable glycine dehydrogenase (decarboxylating) subunit 2 (491 aa).

Lys-273 is subject to N6-(pyridoxal phosphate)lysine.

The protein belongs to the GcvP family. C-terminal subunit subfamily. The glycine cleavage system is composed of four proteins: P, T, L and H. In this organism, the P 'protein' is a heterodimer of two subunits. The cofactor is pyridoxal 5'-phosphate.

It carries out the reaction N(6)-[(R)-lipoyl]-L-lysyl-[glycine-cleavage complex H protein] + glycine + H(+) = N(6)-[(R)-S(8)-aminomethyldihydrolipoyl]-L-lysyl-[glycine-cleavage complex H protein] + CO2. Its function is as follows. The glycine cleavage system catalyzes the degradation of glycine. The P protein binds the alpha-amino group of glycine through its pyridoxal phosphate cofactor; CO(2) is released and the remaining methylamine moiety is then transferred to the lipoamide cofactor of the H protein. The chain is Probable glycine dehydrogenase (decarboxylating) subunit 2 from Bacillus cytotoxicus (strain DSM 22905 / CIP 110041 / 391-98 / NVH 391-98).